The primary structure comprises 217 residues: MRVILLGAPGAGKGTQAQLIMEHFGIPQISTGDMLRAAVKAGTPLGLQAKDIMASGGLVSDDLIIALVKERISSSDCSNGFLFDGFPRTIPQAEALLEADVHIDHVIEIHVPDEEIVARLSGRRVHEASGRVYHIIHNAPRVEGHDDVTGEPLVQRPDDHEATVRKRLAVYHEQTEPLVGFYQKLVAEGKVKAPKYTRINGIGSVDSIRQQLLDVLR.

10–15 is an ATP binding site; sequence GAGKGT. The interval 30–59 is NMP; the sequence is STGDMLRAAVKAGTPLGLQAKDIMASGGLV. AMP is bound by residues threonine 31, arginine 36, 57–59, 85–88, and glutamine 92; these read GLV and GFPR. Residues 122–159 are LID; sequence GRRVHEASGRVYHIIHNAPRVEGHDDVTGEPLVQRPDD. Residues arginine 123 and 132–133 contribute to the ATP site; that span reads VY. Arginine 156 and arginine 167 together coordinate AMP. Position 203 (glycine 203) interacts with ATP.

The protein belongs to the adenylate kinase family. Monomer.

It localises to the cytoplasm. The enzyme catalyses AMP + ATP = 2 ADP. It participates in purine metabolism; AMP biosynthesis via salvage pathway; AMP from ADP: step 1/1. Its function is as follows. Catalyzes the reversible transfer of the terminal phosphate group between ATP and AMP. Plays an important role in cellular energy homeostasis and in adenine nucleotide metabolism. In Cellvibrio japonicus (strain Ueda107) (Pseudomonas fluorescens subsp. cellulosa), this protein is Adenylate kinase.